A 234-amino-acid polypeptide reads, in one-letter code: Ribonuclease Trv (234 aa).

5 disulfide bridges follow: C5–C24, C13–C59, C23–C125, C67–C117, and C189–C224. N-linked (GlcNAc...) asparagine glycosylation is present at N15. Residue H52 is part of the active site. A glycan (N-linked (GlcNAc...) asparagine) is linked at N75. Active-site residues include E110 and H114.

Belongs to the RNase T2 family.

The catalysed reaction is a ribonucleotidyl-ribonucleotide-RNA + H2O = a 3'-end 3'-phospho-ribonucleotide-RNA + a 5'-end dephospho-ribonucleoside-RNA + H(+). Functionally, this is a base non-specific and adenylic acid preferential ribonuclease. This chain is Ribonuclease Trv, found in Hypocrea rufa (Trichoderma viride).